A 348-amino-acid chain; its full sequence is L-asparaginase 2 (348 aa).

The N-terminal stretch at 1–22 (MEFFKKTALAALVMGFSGAALA) is a signal peptide. The 325-residue stretch at 24 to 348 (PNITILATGG…QQIQQIFNQY (325 aa)) folds into the Asparaginase/glutaminase domain. Thr-34 (O-isoaspartyl threonine intermediate) is an active-site residue. Residues 80–81 (SQ) and 111–112 (TD) each bind substrate. A disulfide bond links Cys-99 and Cys-127.

The protein belongs to the asparaginase 1 family. In terms of assembly, homotetramer.

The protein localises to the periplasm. The enzyme catalyses L-asparagine + H2O = L-aspartate + NH4(+). The polypeptide is L-asparaginase 2 (ansB) (Escherichia coli (strain K12)).